The following is a 1167-amino-acid chain: Non-toxic nonhemagglutinin (1167 aa).

Residues methionine 1 to asparagine 381 form a light chain nLC region. The N-heavy chain nHN stretch occupies residues asparagine 382–isoleucine 804. The segment at lysine 805–isoleucine 1167 is C-heavy chain nHC.

Belongs to the botulism non-toxic nonhemagglutinin family.

In terms of biological role, expression of the ptox operon (ntnh-orfX1-orfX2-orfX3-pmp1) in B.thuringiensis kills Anopheles but not Aedes mosquito 3rd instar larvae. The ntnh-pmp1 construct is about half as toxic. The polypeptide is Non-toxic nonhemagglutinin (Paraclostridium bifermentans (Clostridium bifermentans)).